A 195-amino-acid polypeptide reads, in one-letter code: ATP synthase subunit b (195 aa).

The chain crosses the membrane as a helical span at residues 28-48 (IFPNVYVLIAHVISLIFLLLL).

This sequence belongs to the ATPase B chain family. In terms of assembly, F-type ATPases have 2 components, F(1) - the catalytic core - and F(0) - the membrane proton channel. F(1) has five subunits: alpha(3), beta(3), gamma(1), delta(1), epsilon(1). F(0) has three main subunits: a(1), b(2) and c(10-14). The alpha and beta chains form an alternating ring which encloses part of the gamma chain. F(1) is attached to F(0) by a central stalk formed by the gamma and epsilon chains, while a peripheral stalk is formed by the delta and b chains.

It localises to the cell membrane. Functionally, f(1)F(0) ATP synthase produces ATP from ADP in the presence of a proton or sodium gradient. F-type ATPases consist of two structural domains, F(1) containing the extramembraneous catalytic core and F(0) containing the membrane proton channel, linked together by a central stalk and a peripheral stalk. During catalysis, ATP synthesis in the catalytic domain of F(1) is coupled via a rotary mechanism of the central stalk subunits to proton translocation. Component of the F(0) channel, it forms part of the peripheral stalk, linking F(1) to F(0). The polypeptide is ATP synthase subunit b (Malacoplasma penetrans (strain HF-2) (Mycoplasma penetrans)).